The following is a 197-amino-acid chain: Nucleoside triphosphate pyrophosphatase (197 aa).

Asp72 functions as the Proton acceptor in the catalytic mechanism.

Belongs to the Maf family. Requires a divalent metal cation as cofactor.

It is found in the cytoplasm. It carries out the reaction a ribonucleoside 5'-triphosphate + H2O = a ribonucleoside 5'-phosphate + diphosphate + H(+). The catalysed reaction is a 2'-deoxyribonucleoside 5'-triphosphate + H2O = a 2'-deoxyribonucleoside 5'-phosphate + diphosphate + H(+). Functionally, nucleoside triphosphate pyrophosphatase. May have a dual role in cell division arrest and in preventing the incorporation of modified nucleotides into cellular nucleic acids. In Corynebacterium glutamicum (strain ATCC 13032 / DSM 20300 / JCM 1318 / BCRC 11384 / CCUG 27702 / LMG 3730 / NBRC 12168 / NCIMB 10025 / NRRL B-2784 / 534), this protein is Nucleoside triphosphate pyrophosphatase.